The sequence spans 275 residues: Large ribosomal subunit protein uL2 (275 aa).

Positions 222 to 275 (GVAMNPVDHPHGGGEGRNKGRHPTSPWGQKSKGLKTRHNKRTDNMIIRRRAKKK) are disordered. Residues 229–239 (DHPHGGGEGRN) are compositionally biased toward basic and acidic residues.

It belongs to the universal ribosomal protein uL2 family. In terms of assembly, part of the 50S ribosomal subunit. Forms a bridge to the 30S subunit in the 70S ribosome.

Its function is as follows. One of the primary rRNA binding proteins. Required for association of the 30S and 50S subunits to form the 70S ribosome, for tRNA binding and peptide bond formation. It has been suggested to have peptidyltransferase activity; this is somewhat controversial. Makes several contacts with the 16S rRNA in the 70S ribosome. The sequence is that of Large ribosomal subunit protein uL2 from Psychrobacter cryohalolentis (strain ATCC BAA-1226 / DSM 17306 / VKM B-2378 / K5).